The primary structure comprises 58 residues: MVRRRRSRSPYRRRSRSRSRSGSDRSRSRYRSRSRSRSRSRSRARSRSPYHHHINQYI.

2 stretches are compositionally biased toward basic residues: residues 1–19 (MVRR…RSRS) and 28–58 (SRYR…NQYI). Residues 1–58 (MVRRRRSRSPYRRRSRSRSRSGSDRSRSRYRSRSRSRSRSRSRARSRSPYHHHINQYI) are disordered.

Post-translationally, probably phosphorylated in infected cells.

Its subcellular location is the virion. Its function is as follows. Thought to be responsible for DNA condensation during packaging of the nucleocapsids. The chain is DNA-binding protein (P7.3) from Cryptophlebia leucotreta granulosis virus (ClGV).